The chain runs to 457 residues: Oxysterol-binding protein-related protein 3C (457 aa).

Disordered regions lie at residues 37-61 (NEGVEVINPEGGKEDAEEEAQKGRW) and 363-393 (QGDLSKAGSEKHSLEERQRAEKRTRETKGQK). Composition is skewed to basic and acidic residues over residues 47–61 (GGKEDAEEEAQKGRW) and 370–391 (GSEKHSLEERQRAEKRTRETKG).

The protein belongs to the OSBP family. Expressed in roots, leaves, stems and flowers.

In terms of biological role, may be involved in the transport of sterols. The sequence is that of Oxysterol-binding protein-related protein 3C (ORP3C) from Arabidopsis thaliana (Mouse-ear cress).